Consider the following 359-residue polypeptide: Holliday junction branch migration complex subunit RuvB (359 aa).

Residues 1–187 (MSGLEHGDAS…FGFTAHLEFY (187 aa)) are large ATPase domain (RuvB-L). Residues Leu26, Arg27, Gly68, Lys71, Thr72, Thr73, 134 to 136 (EDY), Arg177, Tyr187, and Arg224 contribute to the ATP site. Position 72 (Thr72) interacts with Mg(2+). The interval 188 to 257 (ETHELEQVIE…SVRAALDLYD (70 aa)) is small ATPAse domain (RuvB-S). The tract at residues 260-359 (PLGLDRLDRA…VAGALFGDEL (100 aa)) is head domain (RuvB-H). DNA-binding residues include Arg315 and Arg320.

The protein belongs to the RuvB family. In terms of assembly, homohexamer. Forms an RuvA(8)-RuvB(12)-Holliday junction (HJ) complex. HJ DNA is sandwiched between 2 RuvA tetramers; dsDNA enters through RuvA and exits via RuvB. An RuvB hexamer assembles on each DNA strand where it exits the tetramer. Each RuvB hexamer is contacted by two RuvA subunits (via domain III) on 2 adjacent RuvB subunits; this complex drives branch migration. In the full resolvosome a probable DNA-RuvA(4)-RuvB(12)-RuvC(2) complex forms which resolves the HJ.

The protein resides in the cytoplasm. It catalyses the reaction ATP + H2O = ADP + phosphate + H(+). In terms of biological role, the RuvA-RuvB-RuvC complex processes Holliday junction (HJ) DNA during genetic recombination and DNA repair, while the RuvA-RuvB complex plays an important role in the rescue of blocked DNA replication forks via replication fork reversal (RFR). RuvA specifically binds to HJ cruciform DNA, conferring on it an open structure. The RuvB hexamer acts as an ATP-dependent pump, pulling dsDNA into and through the RuvAB complex. RuvB forms 2 homohexamers on either side of HJ DNA bound by 1 or 2 RuvA tetramers; 4 subunits per hexamer contact DNA at a time. Coordinated motions by a converter formed by DNA-disengaged RuvB subunits stimulates ATP hydrolysis and nucleotide exchange. Immobilization of the converter enables RuvB to convert the ATP-contained energy into a lever motion, pulling 2 nucleotides of DNA out of the RuvA tetramer per ATP hydrolyzed, thus driving DNA branch migration. The RuvB motors rotate together with the DNA substrate, which together with the progressing nucleotide cycle form the mechanistic basis for DNA recombination by continuous HJ branch migration. Branch migration allows RuvC to scan DNA until it finds its consensus sequence, where it cleaves and resolves cruciform DNA. This chain is Holliday junction branch migration complex subunit RuvB, found in Clavibacter michiganensis subsp. michiganensis (strain NCPPB 382).